The sequence spans 323 residues: MSGSFWTSTQRHHWQYTKASLAKERQKLWLLECQLFPQGLNIVMDSKQNGIEQSITKNIPITHRDLHYDKDYNLRIYCYFLIMKLGRRLNIRQYALATAHIYLSRFLIKASVREINLYMLVTTCVYLACKVEECPQYIRTLVSEARTLWPEFIPPDPTKVTEFEFYLLEELESYLIVHHPYQSLKQIVQVLKQPPFQITLSSDDLQNCWSLINDSYINDVHLLYPPHIIAVACLFITISIHGKPTKGSSLASAASEAIRDPKNSSSPVQIAFNRFMAESLVDLEEVMDTIQEQITLYDHWDKYHEQWIKFLLHTLYLRPASAI.

The Cyclin N-terminal domain occupies 45-176 (DSKQNGIEQS…LLEELESYLI (132 aa)).

Belongs to the cyclin family. Cyclin C subfamily. Component of the SRB8-11 complex which consists of SRB8, SSN2/SRB9, SSN3/SRB10 and SSN8/SRB11. The SRB8-11 complex associates with the Mediator complex. The SSN3/SRB10 and SSN8/SRB11 kinase-cyclin pair also associate with the RNA polymerase II holoenzyme. Interacts with ASK10.

The protein resides in the nucleus. In terms of biological role, component of the SRB8-11 complex. The SRB8-11 complex is a regulatory module of the Mediator complex which is itself involved in regulation of basal and activated RNA polymerase II-dependent transcription. The SRB8-11 complex may be involved in the transcriptional repression of a subset of genes regulated by Mediator. It may inhibit the association of the Mediator complex with RNA polymerase II to form the holoenzyme complex. The SRB8-11 complex phosphorylates the C-terminal domain (CTD) of the largest subunit of RNA polymerase II RPB1 at serines 2 and 5. The SSN3/SRB10 and SSN8/SRB11 kinase-cyclin pair may also positively and negatively regulate numerous transcriptional activators in response to changes in nutritional and physiological conditions. This chain is RNA polymerase II holoenzyme cyclin-like subunit (SSN8), found in Saccharomyces cerevisiae (strain ATCC 204508 / S288c) (Baker's yeast).